The primary structure comprises 883 residues: MSNTTPMMQQYLKIKSQYQDCLLFFRLGDFYEMFFEDAKEASRVLEITLTKRDAKKENPIPMCGVPYHSANSYIETLINNGYKVAICEQMEDPKQTKGMVKREVVRVVTPGTVMEQGGMDENQNNYILSFIKQDSNYALSYCDISTGELKATQIEDEDTLINEIVTINPNEIVVNQEIDENLKKQIYLTTETITIRESISDASYEVNQLTNNHMYLATQLLLDYVYHTQKRDLSHLETAITYAAVDFMKMDYYAKRNLELTESIRLKSKKGTLLWLMDETKTPMGARRLKQWIDRPLINKERIEERLSIVESFMNHFIERDTLRGYLNQVYDIERLVGRVSYGNVNARDLIQLKHSISEIPNIKSLLESMNDVASNQFSSLEPLEDLLQVLEDSLIEEPPISIKDGGLFKQGFSKQLDEYLEASKNGKDWLAQLQAKERERTGIKSLKISFNKVFGYFIEITRANLQGFEPSKFGYHRKQTLSNAERFITDELKEKEDIILGAEDKAVDLEYQLFVRLREHIKTYTERLQKQAKIISELDCLQSFAEIAQKYNYVKPEFSDNKTLSLENSRHPVVERVMDYNDYVPNDCKLDKDNFIYLITGPNMSGKSTYMRQVAIISIMAQMGAYVPCNKAELPIFDQIFTRIGAADDLVSGKSTFMVEMLEAQKALTYATEDSLIIFDEIGRGTSTYDGLALAQAMIEYVAQTSHAKTLFSTHYHELTTLDQELPSLKNVHVAADEYQGELIFLHKVKDGAVDDSYGIQVAKLANLPDEVINRAQVILDAFEQSQNTSDNEEHSNITVLKDSASVEGFTDDDAQNANNSDKKSQTTKNAIENEFEQASFNLFDSEAMTSEIEEQIKNLNISNMTPIEALLKLSELQNQLR.

602-609 provides a ligand contact to ATP; that stretch reads GPNMSGKS.

This sequence belongs to the DNA mismatch repair MutS family.

In terms of biological role, this protein is involved in the repair of mismatches in DNA. It is possible that it carries out the mismatch recognition step. This protein has a weak ATPase activity. The chain is DNA mismatch repair protein MutS from Staphylococcus haemolyticus (strain JCSC1435).